The sequence spans 234 residues: Peptidase E (234 aa).

Active-site charge relay system residues include Ser-123, Asp-138, and His-160.

This sequence belongs to the peptidase S51 family.

Its subcellular location is the cytoplasm. The enzyme catalyses Dipeptidase E catalyzes the hydrolysis of dipeptides Asp-|-Xaa. It does not act on peptides with N-terminal Glu, Asn or Gln, nor does it cleave isoaspartyl peptides.. Functionally, hydrolyzes dipeptides containing N-terminal aspartate residues. May play a role in allowing the cell to use peptide aspartate to spare carbon otherwise required for the synthesis of the aspartate family of amino acids. The sequence is that of Peptidase E from Actinobacillus pleuropneumoniae serotype 7 (strain AP76).